A 158-amino-acid chain; its full sequence is Putative pre-16S rRNA nuclease (158 aa).

It belongs to the YqgF nuclease family.

It localises to the cytoplasm. In terms of biological role, could be a nuclease involved in processing of the 5'-end of pre-16S rRNA. In Paracoccus denitrificans (strain Pd 1222), this protein is Putative pre-16S rRNA nuclease.